We begin with the raw amino-acid sequence, 379 residues long: Stimulator of interferon genes protein (379 aa).

The Cytoplasmic portion of the chain corresponds to 1–23 (MPQDPSTRSSPARLLIPEPRAGR). Residues 24-40 (ARHAACVLLAVCFVVLF) traverse the membrane as a helical segment. At 41–50 (LSGEPLAPII) the chain is on the lumenal side. Residues 51-75 (RSVCTQLAALQLGVLLKGCCCLAEE) form a helical membrane-spanning segment. Over 76-97 (IFHLHSRHHGSLWQVLCSCFPP) the chain is Cytoplasmic. A helical membrane pass occupies residues 98–111 (RWYLALLLVGGSAY). Residues 112-121 (LDPPEDNGHS) lie on the Lumenal side of the membrane. The helical transmembrane segment at 122-139 (PRLALTLSCLCQLLVLAL) threads the bilayer. Topologically, residues 140-379 (GLQKLSAVEV…LPQPLRSDCP (240 aa)) are cytoplasmic. A cyclic dinucleotide-binding domain (CBD) region spans residues 158–345 (KNVAHGLAWS…WHLQQQQREE (188 aa)). Residues Ser167, Tyr172, 243 to 246 (RVYK), and Ser268 contribute to the 3',3'-c-di-GMP site. 2',3'-cGAMP-binding positions include 167–172 (SYYIGY), 243–246 (RVYK), and Ser268. The short motif at 363-366 (LQVS) is the pLxIS motif element. Ser366 carries the phosphoserine; by TBK1 modification.

The protein belongs to the STING family. In terms of assembly, homodimer; forms a homodimer in absence of cyclic nucleotide (c-di-GMP or cGAMP). Homotetramer; in presence of cyclic nucleotide (c-di-GMP or cGAMP), forms tetramers and higher-order oligomers through side-by-side packing. Interacts (when phosphorylated) with IRF3; following activation and phosphorylation on the pLxIS motif by TBK1, recruits IRF3. In terms of processing, phosphorylation by TBK1 leads to activation and production of IFN-beta. Following cyclic nucleotide (c-di-GMP or cGAMP)-binding, activation and translocation from the endoplasmic reticulum, STING1 is phosphorylated by TBK1 at Ser-366 in the pLxIS motif. The phosphorylated pLxIS motif constitutes an IRF3-binding motif, leading to recruitment of the transcription factor IRF3 to induce type-I interferons and other cytokines.

The protein resides in the endoplasmic reticulum membrane. Its subcellular location is the cytoplasm. The protein localises to the perinuclear region. It is found in the endoplasmic reticulum-Golgi intermediate compartment membrane. It localises to the golgi apparatus membrane. The protein resides in the cytoplasmic vesicle. Its subcellular location is the autophagosome membrane. The enzyme catalyses H(+)(in) = H(+)(out). Functionally, facilitator of innate immune signaling that acts as a sensor of cytosolic DNA from bacteria and viruses and promotes the production of type I interferon (IFN-alpha and IFN-beta). Innate immune response is triggered in response to non-CpG double-stranded DNA from viruses and bacteria delivered to the cytoplasm. Acts by binding cyclic dinucleotides: recognizes and binds cyclic di-GMP (c-di-GMP), a second messenger produced by bacteria, and cyclic GMP-AMP (cGAMP), a messenger produced by CGAS in response to DNA virus in the cytosol. Upon binding of c-di-GMP or cGAMP, STING1 oligomerizes and is able to activate both NF-kappa-B and IRF3 transcription pathways to induce expression of type I interferon and exert a potent anti-viral state. Exhibits 2',3' phosphodiester linkage-specific ligand recognition: can bind both 2'-3' linked cGAMP and 3'-3' linked cGAMP but is preferentially activated by 2'-3' linked cGAMP. In addition to promote the production of type I interferons, plays a direct role in autophagy. Following cGAMP-binding, STING1 buds from the endoplasmic reticulum into COPII vesicles, which then form the endoplasmic reticulum-Golgi intermediate compartment (ERGIC). The ERGIC serves as the membrane source for LC3 lipidation, leading to formation of autophagosomes that target cytosolic DNA or DNA viruses for degradation by the lysosome. Promotes autophagy by acting as a proton channel that directs proton efflux from the Golgi to facilitate LC3 lipidation. The autophagy- and interferon-inducing activities can be uncoupled and autophagy induction is independent of TBK1 phosphorylation. The polypeptide is Stimulator of interferon genes protein (Gallus gallus (Chicken)).